The chain runs to 448 residues: Chaperone SurA (448 aa).

An N-terminal signal peptide occupies residues 1–27 (MKKTLRFAAVASGLVASLITVAPSASA). PpiC domains are found at residues 185-288 (QQDL…RLVE) and 301-399 (IVQT…QVLG).

Its subcellular location is the periplasm. It catalyses the reaction [protein]-peptidylproline (omega=180) = [protein]-peptidylproline (omega=0). Functionally, chaperone involved in the correct folding and assembly of outer membrane proteins. Recognizes specific patterns of aromatic residues and the orientation of their side chains, which are found more frequently in integral outer membrane proteins. May act in both early periplasmic and late outer membrane-associated steps of protein maturation. This Burkholderia mallei (strain ATCC 23344) protein is Chaperone SurA.